The chain runs to 210 residues: Large ribosomal subunit protein uL3 (210 aa).

Residues 125-151 (RHGQSRGPMSHGSRYHRRPGSMGPVAP) form a disordered region.

This sequence belongs to the universal ribosomal protein uL3 family. Part of the 50S ribosomal subunit. Forms a cluster with proteins L14 and L19.

Functionally, one of the primary rRNA binding proteins, it binds directly near the 3'-end of the 23S rRNA, where it nucleates assembly of the 50S subunit. The protein is Large ribosomal subunit protein uL3 of Bacillus cereus (strain Q1).